We begin with the raw amino-acid sequence, 464 residues long: Chitotriosidase-1 (464 aa).

An N-terminal signal peptide occupies residues 1–21 (MVQSLAWAGVMTLLMVQWGSA). One can recognise a GH18 domain in the interval 22–386 (AKLVCYLTNW…RTLRQELNLP (365 aa)). An intrachain disulfide couples cysteine 26 to cysteine 51. Residues 70-71 (EH) and 97-100 (GGWT) each bind chitin. The active-site Proton donor is glutamate 140. Residue 210–213 (MAYD) participates in chitin binding. A disulfide bond links cysteine 307 and cysteine 368. The interval 385 to 416 (LPSETPRSPEQIIPEPRPSSMPEQGPSPGLDN) is disordered. The region spanning 415–464 (DNFCQGKADGVYPNPGDESTYYNCGGGRLFQQSCPPGLVFRASCKCCTWS) is the Chitin-binding type-2 domain. Cysteines 448 and 461 form a disulfide.

The protein belongs to the glycosyl hydrolase 18 family. Chitinase class II subfamily. Monomer. In terms of tissue distribution, highly expressed in tongue, stomach, kidney, brain, skin, testis, and bone marrow. Low level of expression was found in lung, heart, spleen, small intestine, and liver. Not detectable in pancreas, salivary gland, large intestine, uterus, or peripheral blood mononuclear cells (PBMC).

It is found in the secreted. Its subcellular location is the lysosome. The enzyme catalyses Random endo-hydrolysis of N-acetyl-beta-D-glucosaminide (1-&gt;4)-beta-linkages in chitin and chitodextrins.. In terms of biological role, degrades chitin, chitotriose and chitobiose. May participate in the defense against nematodes and other pathogens. The sequence is that of Chitotriosidase-1 (Chit1) from Mus musculus (Mouse).